The following is a 200-amino-acid chain: UPF0329 protein ECU06_1670 (200 aa).

The protein belongs to the UPF0329 family.

This is UPF0329 protein ECU06_1670 from Encephalitozoon cuniculi (strain GB-M1) (Microsporidian parasite).